We begin with the raw amino-acid sequence, 332 residues long: Phenylalanine--tRNA ligase alpha subunit (332 aa).

Glu-252 contributes to the Mg(2+) binding site.

The protein belongs to the class-II aminoacyl-tRNA synthetase family. Phe-tRNA synthetase alpha subunit type 1 subfamily. Tetramer of two alpha and two beta subunits. Mg(2+) is required as a cofactor.

It localises to the cytoplasm. It carries out the reaction tRNA(Phe) + L-phenylalanine + ATP = L-phenylalanyl-tRNA(Phe) + AMP + diphosphate + H(+). The protein is Phenylalanine--tRNA ligase alpha subunit of Marinobacter nauticus (strain ATCC 700491 / DSM 11845 / VT8) (Marinobacter aquaeolei).